The chain runs to 354 residues: Arginase (354 aa).

The Mn(2+) site is built by His-136, Asp-159, His-161, and Asp-163. Residues Asn-165, Ser-172, and Asp-217 each coordinate L-arginine. Residues Asp-266 and Asp-268 each coordinate Mn(2+).

It belongs to the arginase family. As to quaternary structure, homotrimer; oligomerization is dependent on Mn(2+) binding. Mn(2+) is required as a cofactor.

The catalysed reaction is L-arginine + H2O = urea + L-ornithine. The protein operates within nitrogen metabolism; urea cycle; L-ornithine and urea from L-arginine: step 1/1. Functionally, catalyzes the hydrolysis of L-arginine into urea and L-ornithine, which is a precursor for polyamine biosynthesis. May play a role in parasite intra-hepatic development during the host liver stage. In Plasmodium berghei (strain Anka), this protein is Arginase.